The following is a 606-amino-acid chain: Homeobox protein B-H1 (606 aa).

Residues 1-14 (MKDSMSILTQTPSE) are compositionally biased toward polar residues. Disordered regions lie at residues 1–65 (MKDS…PAVA), 104–188 (YKQQ…HPHA), 261–340 (APAG…AFTD), and 508–606 (AAAN…QIQV). The segment covering 21-40 (QLHHHLSHHHHPALHHHPVL) has biased composition (basic residues). Residues 41 to 65 (QHHYSLQQQHQQQQQQQPPAPPAVA) show a composition bias toward low complexity. Over residues 108–118 (QQHHHHHHQSH) the composition is skewed to basic residues. A compositionally biased stretch (low complexity) spans 119–138 (HNNNNHSGGSSGGTSPTHHN). Over residues 166–188 (HHLHPQSHPHPHPHPHSHPHPHA) the composition is skewed to basic residues. Residues 266 to 284 (ELDDSSDYHEENEDCDSDE) show a composition bias toward acidic residues. Over residues 286–295 (GSAGGGGGGS) the composition is skewed to gly residues. Over residues 297–314 (HMDDHSVCSNGGKDDDGN) the composition is skewed to basic and acidic residues. Residues 315–325 (SIKSGSTSDMS) are compositionally biased toward polar residues. A DNA-binding region (homeobox) is located at residues 331 to 390 (QRKARTAFTDHQLQTLEKSFERQKYLSVQERQELAHKLDLSDCQVKTWYQNRRTKWMRQT). The span at 513-522 (GGPPPPPPPS) shows a compositional bias: pro residues. A compositionally biased stretch (low complexity) spans 523-534 (SAAAATGGSPSP). Residues 561-576 (ASPPLPLPLARPPSTP) are compositionally biased toward pro residues.

The protein belongs to the Antp homeobox family. In terms of tissue distribution, abundant in the eye-antenna imaginal disk.

The protein resides in the nucleus. Functionally required in R1 and R6 receptor cells and primary pigment cells for normal eye development. This Drosophila ananassae (Fruit fly) protein is Homeobox protein B-H1 (B-H1).